The following is a 492-amino-acid chain: Protein adenylyltransferase Fic (492 aa).

The span at 1–18 shows a compositional bias: low complexity; that stretch reads MGTEAEQPSPPAQQQDQE. The tract at residues 1-26 is disordered; the sequence is MGTEAEQPSPPAQQQDQENPPLCKAQ. Residues 33-55 traverse the membrane as a helical segment; it reads LYRFVLIFVAGSLAAWTFHALSS. 2 TPR repeats span residues 118 to 151 and 152 to 186; these read ALGA…APRH and PEVL…SPSN. The Inhibitory (S/T)XXXE(G/N) motif motif lies at 243–248; sequence SVGIEG. ATP-binding positions include Glu247 and 328–331; that span reads VGGH. A Fido domain is found at 297–432; it reads ITIKDILELH…IRPFVRFIAD (136 aa). His375 is a catalytic residue. Residues 379 to 386, 411 to 412, and Asn419 contribute to the ATP site; these read DGNGRTSR and YY.

The protein belongs to the fic family. As to quaternary structure, homodimer; homodimerization may regulate adenylyltransferase and phosphodiesterase activities.

It localises to the membrane. It carries out the reaction L-tyrosyl-[protein] + ATP = O-(5'-adenylyl)-L-tyrosyl-[protein] + diphosphate. The catalysed reaction is L-threonyl-[protein] + ATP = 3-O-(5'-adenylyl)-L-threonyl-[protein] + diphosphate. The enzyme catalyses 3-O-(5'-adenylyl)-L-threonyl-[protein] + H2O = L-threonyl-[protein] + AMP + H(+). Its activity is regulated as follows. The side chain of Glu-247 determines which of the two opposing activities (AMPylase or de-AMPylase) will take place. In response to endoplasmic reticulum stress, mediates de-AMPylase activity. Adenylyltransferase activity is inhibited by the inhibitory helix present at the N-terminus: Glu-247 binds ATP and competes with ATP-binding at Arg-386, thereby preventing adenylyltransferase activity. In unstressed cells, disengagement of Glu-247 promotes adenylyltransferase activity. Activation dissociates ATP-binding from Glu-247, allowing ordered binding of the entire ATP moiety with the alpha-phosphate in an orientation that is productive for accepting an incoming target hydroxyl side chain. Protein that can both mediate the addition of adenosine 5'-monophosphate (AMP) to specific residues of target proteins (AMPylation), and the removal of the same modification from target proteins (de-AMPylation), depending on the context. The side chain of Glu-247 determines which of the two opposing activities (AMPylase or de-AMPylase) will take place. Acts as a key regulator of the unfolded protein response (UPR) by mediating AMPylation or de-AMPylation of Hsc70-3/BiP. In unstressed cells, acts as an adenylyltransferase by mediating AMPylation of Hsc70-3/BiP at 'Thr-518', thereby inactivating it. In response to endoplasmic reticulum stress, acts as a phosphodiesterase by mediating removal of ATP (de-AMPylation) from Hsc70-3/BiP at 'Thr-518', leading to restore HSPA5/BiP activity. This chain is Protein adenylyltransferase Fic, found in Drosophila melanogaster (Fruit fly).